We begin with the raw amino-acid sequence, 207 residues long: Large ribosomal subunit protein uL4 (207 aa).

The interval 45–78 (RQGTHAVKNRSAVSGGGRKPWRQKGTGRARQGSI) is disordered.

The protein belongs to the universal ribosomal protein uL4 family. Part of the 50S ribosomal subunit.

One of the primary rRNA binding proteins, this protein initially binds near the 5'-end of the 23S rRNA. It is important during the early stages of 50S assembly. It makes multiple contacts with different domains of the 23S rRNA in the assembled 50S subunit and ribosome. Functionally, forms part of the polypeptide exit tunnel. The protein is Large ribosomal subunit protein uL4 of Lacticaseibacillus paracasei (strain ATCC 334 / BCRC 17002 / CCUG 31169 / CIP 107868 / KCTC 3260 / NRRL B-441) (Lactobacillus paracasei).